A 201-amino-acid chain; its full sequence is Large ribosomal subunit protein uL4 (201 aa).

The tract at residues 46-71 (QKTRAEVIGSGKKPWRQKGTGRARAG) is disordered.

Belongs to the universal ribosomal protein uL4 family. In terms of assembly, part of the 50S ribosomal subunit.

Functionally, one of the primary rRNA binding proteins, this protein initially binds near the 5'-end of the 23S rRNA. It is important during the early stages of 50S assembly. It makes multiple contacts with different domains of the 23S rRNA in the assembled 50S subunit and ribosome. Its function is as follows. Forms part of the polypeptide exit tunnel. The protein is Large ribosomal subunit protein uL4 of Shewanella sediminis (strain HAW-EB3).